The primary structure comprises 894 residues: Protein translocase subunit SecA (894 aa).

Residues glutamine 87, 105 to 109 (GEGKT), and aspartate 512 each bind ATP. Positions 836–870 (EVEQAERERQAHAEQESSHYHAEGEGQDFSDLHIG) are disordered. Residues cysteine 875, cysteine 877, cysteine 886, and histidine 887 each contribute to the Zn(2+) site.

This sequence belongs to the SecA family. Monomer and homodimer. Part of the essential Sec protein translocation apparatus which comprises SecA, SecYEG and auxiliary proteins SecDF-YajC and YidC. Requires Zn(2+) as cofactor.

Its subcellular location is the cell inner membrane. It is found in the cytoplasm. The enzyme catalyses ATP + H2O + cellular proteinSide 1 = ADP + phosphate + cellular proteinSide 2.. Its function is as follows. Part of the Sec protein translocase complex. Interacts with the SecYEG preprotein conducting channel. Has a central role in coupling the hydrolysis of ATP to the transfer of proteins into and across the cell membrane, serving both as a receptor for the preprotein-SecB complex and as an ATP-driven molecular motor driving the stepwise translocation of polypeptide chains across the membrane. The protein is Protein translocase subunit SecA of Glaesserella parasuis serovar 5 (strain SH0165) (Haemophilus parasuis).